The sequence spans 509 residues: ATP synthase subunit alpha (509 aa).

169-176 contributes to the ATP binding site; the sequence is GDRQTGKT.

This sequence belongs to the ATPase alpha/beta chains family. In terms of assembly, F-type ATPases have 2 components, CF(1) - the catalytic core - and CF(0) - the membrane proton channel. CF(1) has five subunits: alpha(3), beta(3), gamma(1), delta(1), epsilon(1). CF(0) has three main subunits: a(1), b(2) and c(9-12). The alpha and beta chains form an alternating ring which encloses part of the gamma chain. CF(1) is attached to CF(0) by a central stalk formed by the gamma and epsilon chains, while a peripheral stalk is formed by the delta and b chains.

It is found in the cell inner membrane. The enzyme catalyses ATP + H2O + 4 H(+)(in) = ADP + phosphate + 5 H(+)(out). In terms of biological role, produces ATP from ADP in the presence of a proton gradient across the membrane. The alpha chain is a regulatory subunit. This chain is ATP synthase subunit alpha, found in Bradyrhizobium diazoefficiens (strain JCM 10833 / BCRC 13528 / IAM 13628 / NBRC 14792 / USDA 110).